Consider the following 349-residue polypeptide: Probable dual-specificity RNA methyltransferase RlmN (349 aa).

Glutamate 94 serves as the catalytic Proton acceptor. The Radical SAM core domain maps to 100–321; it reads DEDRATLCVS…TQHGVFATIR (222 aa). The cysteines at positions 107 and 332 are disulfide-linked. 3 residues coordinate [4Fe-4S] cluster: cysteine 114, cysteine 118, and cysteine 121. S-adenosyl-L-methionine-binding positions include 159–160, serine 191, 213–215, and histidine 289; these read GE and SMH. The active-site S-methylcysteine intermediate is cysteine 332.

It belongs to the radical SAM superfamily. RlmN family. [4Fe-4S] cluster serves as cofactor.

The protein resides in the cytoplasm. It carries out the reaction adenosine(2503) in 23S rRNA + 2 reduced [2Fe-2S]-[ferredoxin] + 2 S-adenosyl-L-methionine = 2-methyladenosine(2503) in 23S rRNA + 5'-deoxyadenosine + L-methionine + 2 oxidized [2Fe-2S]-[ferredoxin] + S-adenosyl-L-homocysteine. It catalyses the reaction adenosine(37) in tRNA + 2 reduced [2Fe-2S]-[ferredoxin] + 2 S-adenosyl-L-methionine = 2-methyladenosine(37) in tRNA + 5'-deoxyadenosine + L-methionine + 2 oxidized [2Fe-2S]-[ferredoxin] + S-adenosyl-L-homocysteine. Its function is as follows. Specifically methylates position 2 of adenine 2503 in 23S rRNA and position 2 of adenine 37 in tRNAs. This chain is Probable dual-specificity RNA methyltransferase RlmN, found in Phocaeicola vulgatus (strain ATCC 8482 / DSM 1447 / JCM 5826 / CCUG 4940 / NBRC 14291 / NCTC 11154) (Bacteroides vulgatus).